A 223-amino-acid chain; its full sequence is ATP-dependent dethiobiotin synthetase BioD (223 aa).

A Mg(2+)-binding site is contributed by Thr16. Lys37 is a catalytic residue. Substrate is bound at residue Ser41. Residues Asp50 and Glu111 each contribute to the Mg(2+) site. ATP-binding positions include Asp50, 111-114 (EGAG), 171-172 (NQ), 201-203 (AHV), and Glu208.

The protein belongs to the dethiobiotin synthetase family. As to quaternary structure, homodimer. Mg(2+) serves as cofactor.

It is found in the cytoplasm. The catalysed reaction is (7R,8S)-7,8-diammoniononanoate + CO2 + ATP = (4R,5S)-dethiobiotin + ADP + phosphate + 3 H(+). It functions in the pathway cofactor biosynthesis; biotin biosynthesis; biotin from 7,8-diaminononanoate: step 1/2. In terms of biological role, catalyzes a mechanistically unusual reaction, the ATP-dependent insertion of CO2 between the N7 and N8 nitrogen atoms of 7,8-diaminopelargonic acid (DAPA, also called 7,8-diammoniononanoate) to form a ureido ring. The sequence is that of ATP-dependent dethiobiotin synthetase BioD from Anaeromyxobacter sp. (strain Fw109-5).